The primary structure comprises 1084 residues: Probable hemoglobin and hemoglobin-haptoglobin-binding protein 3 (1084 aa).

The first 24 residues, 1-24 (MTNFKFSLLACSIAFALNASTVYA), serve as a signal peptide directing secretion. 12 repeat units span residues 26-29 (QPTN), 30-33 (QPTN), 34-37 (QPTN), 38-41 (QPTN), 42-45 (QPTN), 46-49 (QPTN), 50-53 (QPTN), 54-57 (QPTN), 58-61 (QPTN), 62-65 (QPTN), 66-69 (QPTN), and 70-73 (QPTN). The 12 X 4 AA tandem repeats of Q-P-T-N stretch occupies residues 26–73 (QPTNQPTNQPTNQPTNQPTNQPTNQPTNQPTNQPTNQPTNQPTNQPTN). Residues 26-75 (QPTNQPTNQPTNQPTNQPTNQPTNQPTNQPTNQPTNQPTNQPTNQPTNQN) are compositionally biased toward low complexity. Residues 26–77 (QPTNQPTNQPTNQPTNQPTNQPTNQPTNQPTNQPTNQPTNQPTNQPTNQNSN) are disordered. The short motif at 83-90 (EQINVSGS) is the TonB box element. One can recognise a TBDR plug domain in the interval 95-220 (NIKEKKVGET…LGGSVIFETK (126 aa)). Residues 228 to 1084 (DKDYYLSYKR…NYRMSVQFEF (857 aa)) enclose the TBDR beta-barrel domain. The short motif at 1067–1084 (NRFYAPGRNYRMSVQFEF) is the TonB C-terminal box element.

It belongs to the TonB-dependent receptor family. Hemoglobin/haptoglobin binding protein subfamily.

It is found in the cell outer membrane. Acts as a receptor for hemoglobin or the hemoglobin/haptoglobin complex of the human host and is required for heme uptake. The chain is Probable hemoglobin and hemoglobin-haptoglobin-binding protein 3 from Haemophilus influenzae (strain ATCC 51907 / DSM 11121 / KW20 / Rd).